A 39-amino-acid chain; its full sequence is Small basic protein 1 (39 aa).

Q1 is modified (pyrrolidone carboxylic acid). 3 disulfide bridges follow: C6–C32, C10–C26, and C14–C31.

Its subcellular location is the secreted. The protein is Small basic protein 1 of Anas platyrhynchos (Mallard).